The following is a 561-amino-acid chain: Arginine--tRNA ligase (561 aa).

The 'HIGH' region signature appears at 123–133 (PNIAKDMHVGH).

The protein belongs to the class-I aminoacyl-tRNA synthetase family. As to quaternary structure, monomer.

The protein localises to the cytoplasm. The catalysed reaction is tRNA(Arg) + L-arginine + ATP = L-arginyl-tRNA(Arg) + AMP + diphosphate. The chain is Arginine--tRNA ligase (argS) from Chlamydia pneumoniae (Chlamydophila pneumoniae).